A 53-amino-acid chain; its full sequence is uncharacterized protein (53 aa).

A signal peptide spans 1 to 23; the sequence is MSILLKILFKLLLLILSITFVIT.

This is an uncharacterized protein from Acheta domesticus (House cricket).